The primary structure comprises 453 residues: Asparagine--tRNA ligase (453 aa).

Belongs to the class-II aminoacyl-tRNA synthetase family. Homodimer.

Its subcellular location is the cytoplasm. It carries out the reaction tRNA(Asn) + L-asparagine + ATP = L-asparaginyl-tRNA(Asn) + AMP + diphosphate + H(+). The protein is Asparagine--tRNA ligase of Malacoplasma penetrans (strain HF-2) (Mycoplasma penetrans).